The following is a 464-amino-acid chain: Dihydrolipoyl dehydrogenase (464 aa).

Residues E36–C44, K53, and A119 contribute to the FAD site. An intrachain disulfide couples C44 to C49. Residues G184 to I188, E207, and A269 to R272 each bind NAD(+). The FAD site is built by D311 and A319. H443 (proton acceptor) is an active-site residue.

It belongs to the class-I pyridine nucleotide-disulfide oxidoreductase family. In terms of assembly, homodimer. FAD is required as a cofactor.

The protein resides in the cytoplasm. It carries out the reaction N(6)-[(R)-dihydrolipoyl]-L-lysyl-[protein] + NAD(+) = N(6)-[(R)-lipoyl]-L-lysyl-[protein] + NADH + H(+). In terms of biological role, the branched-chain alpha-keto dehydrogenase complex catalyzes the overall conversion of alpha-keto acids to acyl-CoA and CO(2). It contains multiple copies of 3 enzymatic components: branched-chain alpha-keto acid decarboxylase (E1), lipoamide acyltransferase (E2) and lipoamide dehydrogenase (E3). This Pseudomonas aeruginosa (strain ATCC 15692 / DSM 22644 / CIP 104116 / JCM 14847 / LMG 12228 / 1C / PRS 101 / PAO1) protein is Dihydrolipoyl dehydrogenase.